We begin with the raw amino-acid sequence, 453 residues long: Na(+)/H(+) antiporter NhaA 2 (453 aa).

Transmembrane regions (helical) follow at residues 23–43 (FLHI…AALI), 74–94 (LHFW…GMEI), 111–131 (LPMA…LSFG), 139–159 (GWAV…ALLG), 168–188 (VFLL…IAFF), 191–211 (GGLD…VIGL), 214–234 (IGVG…LGIL), 235–255 (LTGA…PVTA), 316–336 (VAFG…LSGV), 345–365 (WVMI…IVSV), 386–406 (IMLV…IANL), and 419–439 (LGVL…GVWS).

This sequence belongs to the NhaA Na(+)/H(+) (TC 2.A.33) antiporter family.

It is found in the cell inner membrane. It catalyses the reaction Na(+)(in) + 2 H(+)(out) = Na(+)(out) + 2 H(+)(in). In terms of biological role, na(+)/H(+) antiporter that extrudes sodium in exchange for external protons. The polypeptide is Na(+)/H(+) antiporter NhaA 2 (Pseudomonas putida (strain ATCC 47054 / DSM 6125 / CFBP 8728 / NCIMB 11950 / KT2440)).